The chain runs to 115 residues: NAD(P)H-quinone oxidoreductase subunit M (115 aa).

This sequence belongs to the complex I NdhM subunit family. In terms of assembly, NDH-1 can be composed of about 15 different subunits; different subcomplexes with different compositions have been identified which probably have different functions.

It localises to the cellular thylakoid membrane. The catalysed reaction is a plastoquinone + NADH + (n+1) H(+)(in) = a plastoquinol + NAD(+) + n H(+)(out). It catalyses the reaction a plastoquinone + NADPH + (n+1) H(+)(in) = a plastoquinol + NADP(+) + n H(+)(out). Functionally, NDH-1 shuttles electrons from an unknown electron donor, via FMN and iron-sulfur (Fe-S) centers, to quinones in the respiratory and/or the photosynthetic chain. The immediate electron acceptor for the enzyme in this species is believed to be plastoquinone. Couples the redox reaction to proton translocation, and thus conserves the redox energy in a proton gradient. Cyanobacterial NDH-1 also plays a role in inorganic carbon-concentration. This chain is NAD(P)H-quinone oxidoreductase subunit M, found in Prochlorococcus marinus (strain AS9601).